We begin with the raw amino-acid sequence, 807 residues long: Enhancer of polycomb homolog 2 (807 aa).

Glycyl lysine isopeptide (Lys-Gly) (interchain with G-Cter in SUMO2) cross-links involve residues lysine 135, lysine 195, lysine 324, and lysine 362. The tract at residues 376–396 (DEFPQVLSPVSEPEEENDPDG) is disordered. Serine 538 is subject to Phosphoserine. Low complexity predominate over residues 600-613 (QLQQKQQSQHSSQQ). 2 disordered regions span residues 600-628 (QLQQKQQSQHSSQQTHPKAQGSSTSDCMS) and 645-673 (SAPVPSRSEVAKEQNTGHNNINGVVQPSG). Polar residues-rich tracts occupy residues 614–628 (THPKAQGSSTSDCMS) and 657–673 (EQNTGHNNINGVVQPSG). Residue serine 754 is modified to Phosphoserine.

This sequence belongs to the enhancer of polycomb family.

It is found in the nucleus. In terms of biological role, may play a role in transcription or DNA repair. This Homo sapiens (Human) protein is Enhancer of polycomb homolog 2 (EPC2).